The chain runs to 346 residues: 3',5'-cyclic-nucleotide phosphodiesterase (346 aa).

The protein belongs to the cyclic nucleotide phosphodiesterase class-II family.

The enzyme catalyses a nucleoside 3',5'-cyclic phosphate + H2O = a nucleoside 5'-phosphate + H(+). This chain is 3',5'-cyclic-nucleotide phosphodiesterase (cgs2), found in Schizosaccharomyces pombe (strain 972 / ATCC 24843) (Fission yeast).